The sequence spans 123 residues: Heat-labile enterotoxin IIA, B chain (123 aa).

A signal peptide spans 1–19 (MSSKKIIGAFVLMTGILSG). Residues Cys-33 and Cys-104 are joined by a disulfide bond.

Heterohexamer of one A chain and of five B chains.

Its function is as follows. The biological activity of the toxin is produced by the A chain, which activates intracellular adenyl cyclase. The protein is Heat-labile enterotoxin IIA, B chain of Escherichia coli.